The chain runs to 393 residues: S-adenosylmethionine synthase 4 (393 aa).

Residue glutamate 9 coordinates Mg(2+). Histidine 15 contacts ATP. Residue glutamate 43 coordinates K(+). Positions 56 and 99 each coordinate L-methionine. Residues 167–169, 235–238, aspartate 246, 252–253, alanine 269, lysine 273, and lysine 277 contribute to the ATP site; these read DGK, SGRF, and RK. Residue aspartate 246 coordinates L-methionine. Lysine 277 serves as a coordination point for L-methionine.

This sequence belongs to the AdoMet synthase family. As to quaternary structure, homotetramer. Requires Mn(2+) as cofactor. Mg(2+) is required as a cofactor. It depends on Co(2+) as a cofactor. The cofactor is K(+).

Its subcellular location is the cytoplasm. The enzyme catalyses L-methionine + ATP + H2O = S-adenosyl-L-methionine + phosphate + diphosphate. The protein operates within amino-acid biosynthesis; S-adenosyl-L-methionine biosynthesis; S-adenosyl-L-methionine from L-methionine: step 1/1. Functionally, catalyzes the formation of S-adenosylmethionine from methionine and ATP. The reaction comprises two steps that are both catalyzed by the same enzyme: formation of S-adenosylmethionine (AdoMet) and triphosphate, and subsequent hydrolysis of the triphosphate. The chain is S-adenosylmethionine synthase 4 (METK4) from Vitis vinifera (Grape).